The following is a 50-amino-acid chain: Temporin-SHb (50 aa).

Residues 1–10 (FLGTINLSLC) form the signal peptide. The propeptide occupies 11-35 (EQERDADEEERRDEPDESDVEVEKR). Residues 12 to 31 (QERDADEEERRDEPDESDVE) are disordered. Residues 14–30 (RDADEEERRDEPDESDV) show a composition bias toward acidic residues. The residue at position 48 (leucine 48) is a Leucine amide.

Belongs to the frog skin active peptide (FSAP) family. Temporin subfamily. As to expression, expressed by the skin glands.

Its subcellular location is the secreted. In terms of biological role, amphipathic alpha-helical peptide with no antimicrobial activity. Does not display anti-leishmania activity. Does not show hemolytic activity (LC(50)&gt;116 uM). The polypeptide is Temporin-SHb (Pelophylax saharicus (Sahara frog)).